Consider the following 130-residue polypeptide: Small ribosomal subunit protein uS9 (130 aa).

Belongs to the universal ribosomal protein uS9 family.

The sequence is that of Small ribosomal subunit protein uS9 from Bacillus licheniformis (strain ATCC 14580 / DSM 13 / JCM 2505 / CCUG 7422 / NBRC 12200 / NCIMB 9375 / NCTC 10341 / NRRL NRS-1264 / Gibson 46).